Here is an 878-residue protein sequence, read N- to C-terminus: Phosphoenolpyruvate carboxylase (878 aa).

Residues histidine 138 and lysine 545 contribute to the active site.

It belongs to the PEPCase type 1 family. The cofactor is Mg(2+).

It carries out the reaction oxaloacetate + phosphate = phosphoenolpyruvate + hydrogencarbonate. Forms oxaloacetate, a four-carbon dicarboxylic acid source for the tricarboxylic acid cycle. In Shewanella halifaxensis (strain HAW-EB4), this protein is Phosphoenolpyruvate carboxylase.